A 403-amino-acid polypeptide reads, in one-letter code: Queuine tRNA-ribosyltransferase catalytic subunit 1 (403 aa).

Residue alanine 2 is modified to N-acetylalanine. The active-site Proton acceptor is aspartate 105. 105-109 (DSGGF) serves as a coordination point for queuine. Position 139 is a phosphoserine (serine 139). Residues aspartate 159, glutamine 202, and glycine 229 each coordinate queuine. Positions 260–266 (GVGYATD) are RNA binding. Aspartate 279 functions as the Nucleophile in the catalytic mechanism. An RNA binding; important for wobble base 34 recognition region spans residues 284 to 288 (TRTAR). Zn(2+)-binding residues include cysteine 317, cysteine 319, cysteine 322, and histidine 348.

It belongs to the queuine tRNA-ribosyltransferase family. As to quaternary structure, heterodimer of a catalytic subunit QTRT1 and an accessory subunit QTRT2. Zn(2+) serves as cofactor.

It localises to the cytoplasm. The protein localises to the mitochondrion outer membrane. It catalyses the reaction guanosine(34) in tRNA + queuine = queuosine(34) in tRNA + guanine. In terms of biological role, catalytic subunit of the queuine tRNA-ribosyltransferase (TGT) that catalyzes the base-exchange of a guanine (G) residue with queuine (Q) at position 34 (anticodon wobble position) in tRNAs with GU(N) anticodons (tRNA-Asp, -Asn, -His and -Tyr), resulting in the hypermodified nucleoside queuosine (7-(((4,5-cis-dihydroxy-2-cyclopenten-1-yl)amino)methyl)-7-deazaguanosine). Catalysis occurs through a double-displacement mechanism. The nucleophile active site attacks the C1' of nucleotide 34 to detach the guanine base from the RNA, forming a covalent enzyme-RNA intermediate. The proton acceptor active site deprotonates the incoming queuine, allowing a nucleophilic attack on the C1' of the ribose to form the product. The chain is Queuine tRNA-ribosyltransferase catalytic subunit 1 from Rattus norvegicus (Rat).